The following is a 325-amino-acid chain: UPF0285 protein Mbar_A0208 (325 aa).

The protein belongs to the UPF0285 family.

The chain is UPF0285 protein Mbar_A0208 from Methanosarcina barkeri (strain Fusaro / DSM 804).